A 253-amino-acid polypeptide reads, in one-letter code: uncharacterized protein (253 aa).

EamA domains lie at 1 to 97 and 116 to 237; these read MFFM…IYSL and FFWA…ISRL. The next 8 membrane-spanning stretches (helical) occupy residues 2 to 22, 28 to 48, 53 to 73, 80 to 100, 101 to 121, 138 to 158, 162 to 182, and 214 to 234; these read FFMA…AKQL, IFLL…GLLY, ESAV…TLIL, TEVI…LNLG, IYFS…WALF, AVQL…QFYF, INFL…SFYL, and GVNV…GILI.

This sequence belongs to the EamA transporter family.

Its subcellular location is the cell membrane. This is an uncharacterized protein from Acidianus ambivalens (Desulfurolobus ambivalens).